The chain runs to 233 residues: Large ribosomal subunit protein uL1 (233 aa).

This sequence belongs to the universal ribosomal protein uL1 family. In terms of assembly, part of the 50S ribosomal subunit.

Its function is as follows. Binds directly to 23S rRNA. The L1 stalk is quite mobile in the ribosome, and is involved in E site tRNA release. In terms of biological role, protein L1 is also a translational repressor protein, it controls the translation of the L11 operon by binding to its mRNA. This is Large ribosomal subunit protein uL1 from Vibrio vulnificus (strain CMCP6).